The sequence spans 472 residues: MDLARSSIKLFIANIFGAGLQFLGITFFARELGASQMGVFFLFQALLGIVAIPADFGLRGAVEKRISEGIQPGEYLSSAIILKLIPISLIILSIVVFEQRINGYLGGDFAVYLALAIILQETAQLAVSVLKGELRVGETAELNIIRRITWVGGGFLLVSSGLDAEALIYSLLAGMVVTLAWGLSKISTSLKKPSFKNARSLFNYSKYSVVSSIGGYFYSWMDVAIIGIFLTQSHVGAYETAWRVTAITMLFSQAVASTIFPQVSQWSSKNEQQQIESVISNSITPSMLLVIPAFFGILVFSDEIMGIVFGSEFTIASYVLIILAGEKILQSVHVIIGRSLQALNQPGLAARATVISVVLNLILNVILILSFGIVGAAVATALSFAVNTVLHAHYLSSFVSIKFQYSQIGWCTVSSLIMAGVLFGFKTLVGVNSLIQLFIGIFFGMLVYTTITLLYQPIRETAFKNLIRLVPI.

The next 13 helical transmembrane spans lie at 8–28 (IKLF…ITFF), 38–58 (GVFF…DFGL), 77–97 (SSAI…IVVF), 109–129 (FAVY…AVSV), 164–184 (AEAL…WGLS), 209–229 (VVSS…IGIF), 244–264 (VTAI…PQVS), 289–309 (LVIP…GIVF), 315–335 (IASY…VHVI), 354–374 (VISV…FGIV), 375–395 (GAAV…AHYL), 408–428 (IGWC…FKTL), and 434–454 (LIQL…ITLL).

The protein belongs to the AglR/Agl15 family.

Its subcellular location is the cell membrane. It participates in protein modification; protein glycosylation. The protein operates within cell surface structure biogenesis; S-layer biogenesis. Its function is as follows. Flippase involved in N-glycan biosynthetic pathway that takes place under low-salt conditions (1.75 M instead of 3.4 M). Participates in the formation of the tetrasaccharide present at 'Asn-532' of S-layer glycoprotein Csg, consisting of a sulfated hexose, 2 hexoses and rhamnose. Probably moves the tetrasaccharide from the cytosolic to the extracytosolic side of the membrane. This is Probable low-salt glycan biosynthesis flippase Agl15 (agl15) from Haloferax volcanii (strain ATCC 29605 / DSM 3757 / JCM 8879 / NBRC 14742 / NCIMB 2012 / VKM B-1768 / DS2) (Halobacterium volcanii).